A 689-amino-acid chain; its full sequence is Glycine--tRNA ligase beta subunit (689 aa).

Belongs to the class-II aminoacyl-tRNA synthetase family. In terms of assembly, tetramer of two alpha and two beta subunits.

It is found in the cytoplasm. The catalysed reaction is tRNA(Gly) + glycine + ATP = glycyl-tRNA(Gly) + AMP + diphosphate. The protein is Glycine--tRNA ligase beta subunit of Actinobacillus pleuropneumoniae serotype 5b (strain L20).